The following is an 81-amino-acid chain: Costars family protein ABRACL (81 aa).

The protein belongs to the costars family.

This chain is Costars family protein ABRACL (abracl), found in Danio rerio (Zebrafish).